The chain runs to 147 residues: Hemoglobin subunit epsilon (147 aa).

The 145-residue stretch at 3–147 folds into the Globin domain; that stretch reads HFTAEEKAAI…VAIALGHKYH (145 aa). A phosphoserine mark is found at S14 and S51. Residues H64 and H93 each coordinate heme b.

It belongs to the globin family. As to quaternary structure, heterotetramer of two alpha chains and two epsilon chains in early embryonic hemoglobin Gower-2; two zeta chains and two epsilon chains in early embryonic hemoglobin Gower-1. As to expression, red blood cells.

Functionally, the epsilon chain is a beta-type chain of early mammalian embryonic hemoglobin. The sequence is that of Hemoglobin subunit epsilon (HBE1) from Lagothrix lagotricha (Brown woolly monkey).